We begin with the raw amino-acid sequence, 211 residues long: Putative ankyrin repeat protein R810 (211 aa).

ANK repeat units follow at residues 31 to 61 (TKFI…NLKY), 72 to 101 (NIND…DICA), 103 to 131 (QNSP…KFFG), 133 to 162 (YSSA…FCLE), and 163 to 191 (MEIA…SYFD).

The sequence is that of Putative ankyrin repeat protein R810 from Acanthamoeba polyphaga mimivirus (APMV).